The chain runs to 348 residues: D-alanine--D-alanine ligase (348 aa).

The 206-residue stretch at 136–341 (KYLLQTVGIP…YSDLIEELIQ (206 aa)) folds into the ATP-grasp domain. 169 to 224 (EGSLIYPVFVKPANMGSSVGISKVENREELQEALEEAFRYDARAIVEQGIEAREIE) contacts ATP. Mg(2+)-binding residues include Asp-295, Glu-308, and Asn-310.

It belongs to the D-alanine--D-alanine ligase family. Mg(2+) serves as cofactor. It depends on Mn(2+) as a cofactor.

It is found in the cytoplasm. The enzyme catalyses 2 D-alanine + ATP = D-alanyl-D-alanine + ADP + phosphate + H(+). Its pathway is cell wall biogenesis; peptidoglycan biosynthesis. Its function is as follows. Cell wall formation. The sequence is that of D-alanine--D-alanine ligase (ddl) from Enterococcus faecalis (strain ATCC 700802 / V583).